We begin with the raw amino-acid sequence, 331 residues long: MKLWFPYFLAIVFLHALGLALLFMANNASFYAAASMAYMLGAKHAFDADHIACIDNTIRKLTQQGKNAYGVGFYFSMGHSSVVILMTIISAFAIAWAKEHTPMLEEIGGVVGTLVSGLFLLIIGLLNAIILLDLLKIFKKSHSNESLSQQQNEEIERLLTSRGLLNRFFKPLFNFVSKSWHIYPIGFLFGLGFDTASEIALLALSSSAIKVSMVGMLSLPILFAAGMSLFDTLDGAFMLKAYDWAFKTPLRKIYYNISITALSVFIALFIGLIELFQVVSEKLHLKFENRLLRALQSLEFTDLGYYLVGLFVIAFLGSFFLWKIKFSKLES.

Residues 1 to 5 (MKLWF) are Cytoplasmic-facing. Residues 6–26 (PYFLAIVFLHALGLALLFMAN) traverse the membrane as a helical segment. Residues 27–33 (NASFYAA) lie on the Periplasmic side of the membrane. The helical transmembrane segment at 34 to 54 (ASMAYMLGAKHAFDADHIACI) threads the bilayer. Residues 55–66 (DNTIRKLTQQGK) lie on the Cytoplasmic side of the membrane. A helical transmembrane segment spans residues 67–87 (NAYGVGFYFSMGHSSVVILMT). At 88-113 (IISAFAIAWAKEHTPMLEEIGGVVGT) the chain is on the periplasmic side. Residues 114–135 (LVSGLFLLIIGLLNAIILLDLL) traverse the membrane as a helical segment. Residues 136–178 (KIFKKSHSNESLSQQQNEEIERLLTSRGLLNRFFKPLFNFVSK) lie on the Cytoplasmic side of the membrane. A helical membrane pass occupies residues 179 to 199 (SWHIYPIGFLFGLGFDTASEI). Residues 200–225 (ALLALSSSAIKVSMVGMLSLPILFAA) are Periplasmic-facing. The helical transmembrane segment at 226–246 (GMSLFDTLDGAFMLKAYDWAF) threads the bilayer. Residues 247 to 252 (KTPLRK) lie on the Cytoplasmic side of the membrane. A helical transmembrane segment spans residues 253 to 273 (IYYNISITALSVFIALFIGLI). At 274–302 (ELFQVVSEKLHLKFENRLLRALQSLEFTD) the chain is on the periplasmic side. The helical transmembrane segment at 303–322 (LGYYLVGLFVIAFLGSFFLW) threads the bilayer. At 323-331 (KIKFSKLES) the chain is on the cytoplasmic side.

The protein belongs to the NiCoT transporter (TC 2.A.52) family.

It is found in the cell inner membrane. Its function is as follows. High-affinity nickel intake protein. Imports nickel ions in an energy-dependent fashion. Necessary for the expression of catalytically active urease. The chain is High-affinity nickel-transport protein NixA (nixA) from Helicobacter pylori (strain ATCC 700392 / 26695) (Campylobacter pylori).